The primary structure comprises 330 residues: Phytanoyl-CoA hydroxylase-interacting protein (330 aa).

The Fibronectin type-III domain occupies 6–115 (TPHSIEINNI…ETVEFCTGDY (110 aa)). 2 N-linked (GlcNAc...) asparagine glycosylation sites follow: asparagine 14 and asparagine 325.

This sequence belongs to the PHYHIP family. Interacts with PHYH and ADGRB1. As to expression, highly expressed in the brain.

Its function is as follows. Its interaction with PHYH suggests a role in the development of the central system. The sequence is that of Phytanoyl-CoA hydroxylase-interacting protein (PHYHIP) from Homo sapiens (Human).